The primary structure comprises 399 residues: Probable dual-specificity RNA methyltransferase RlmN (399 aa).

The Proton acceptor role is filled by glutamate 102. The Radical SAM core domain occupies 108–385 (YLDRATVCVS…CTVRVERGVA (278 aa)). A disulfide bond links cysteine 115 and cysteine 390. The [4Fe-4S] cluster site is built by cysteine 122, cysteine 126, and cysteine 129. S-adenosyl-L-methionine is bound by residues 207–208 (GE), serine 239, 262–264 (SLH), and asparagine 347. Cysteine 390 serves as the catalytic S-methylcysteine intermediate.

This sequence belongs to the radical SAM superfamily. RlmN family. The cofactor is [4Fe-4S] cluster.

Its subcellular location is the cytoplasm. It catalyses the reaction adenosine(2503) in 23S rRNA + 2 reduced [2Fe-2S]-[ferredoxin] + 2 S-adenosyl-L-methionine = 2-methyladenosine(2503) in 23S rRNA + 5'-deoxyadenosine + L-methionine + 2 oxidized [2Fe-2S]-[ferredoxin] + S-adenosyl-L-homocysteine. It carries out the reaction adenosine(37) in tRNA + 2 reduced [2Fe-2S]-[ferredoxin] + 2 S-adenosyl-L-methionine = 2-methyladenosine(37) in tRNA + 5'-deoxyadenosine + L-methionine + 2 oxidized [2Fe-2S]-[ferredoxin] + S-adenosyl-L-homocysteine. Its function is as follows. Specifically methylates position 2 of adenine 2503 in 23S rRNA and position 2 of adenine 37 in tRNAs. This chain is Probable dual-specificity RNA methyltransferase RlmN, found in Roseiflexus castenholzii (strain DSM 13941 / HLO8).